The following is a 535-amino-acid chain: CTP synthase (535 aa).

Positions 1–267 (MTKFIFVTGG…DDIVIKRLDL (267 aa)) are amidoligase domain. CTP is bound at residue S13. A UTP-binding site is contributed by S13. 14–19 (SLGKGI) is an ATP binding site. Residue Y54 coordinates L-glutamine. D71 is an ATP binding site. Positions 71 and 141 each coordinate Mg(2+). Residues 148–150 (DIE), 188–193 (KTKPTQ), and K224 contribute to the CTP site. UTP is bound by residues 188-193 (KTKPTQ) and K224. ATP is bound at residue 240–242 (RDA). The 243-residue stretch at 293 to 535 (TIGLVGKYVS…VEAAYKHQNK (243 aa)) folds into the Glutamine amidotransferase type-1 domain. G355 serves as a coordination point for L-glutamine. Residue C382 is the Nucleophile; for glutamine hydrolysis of the active site. L-glutamine-binding positions include 383–386 (LGMQ), E406, and R463. Catalysis depends on residues H508 and E510.

The protein belongs to the CTP synthase family. Homotetramer.

The enzyme catalyses UTP + L-glutamine + ATP + H2O = CTP + L-glutamate + ADP + phosphate + 2 H(+). It carries out the reaction L-glutamine + H2O = L-glutamate + NH4(+). It catalyses the reaction UTP + NH4(+) + ATP = CTP + ADP + phosphate + 2 H(+). It functions in the pathway pyrimidine metabolism; CTP biosynthesis via de novo pathway; CTP from UDP: step 2/2. With respect to regulation, allosterically activated by GTP, when glutamine is the substrate; GTP has no effect on the reaction when ammonia is the substrate. The allosteric effector GTP functions by stabilizing the protein conformation that binds the tetrahedral intermediate(s) formed during glutamine hydrolysis. Inhibited by the product CTP, via allosteric rather than competitive inhibition. In terms of biological role, catalyzes the ATP-dependent amination of UTP to CTP with either L-glutamine or ammonia as the source of nitrogen. Regulates intracellular CTP levels through interactions with the four ribonucleotide triphosphates. The polypeptide is CTP synthase (Staphylococcus haemolyticus (strain JCSC1435)).